A 331-amino-acid chain; its full sequence is MIDKSIPLVDLHRHLDGNVRVQTIWELGHQHGIALPAQSLAELAPFVQIQGKENSLVAFLKKLDWMVAVLADLDAVKRVAYENVADAALSGLDYAELRFSPYYMAMNHNLPIEGVVEAVIDGVNAGLKDHAVKINLIGIMSRSFGQEKCLLELEGLLAHKDKLVAMDLAGDELGFPGDLFNDHFKRVRDAGLAITAHAGEAAGSESMWQAIQTLGATRIGHGVNAIHDPKLMEYLVKHKIGIESCPTSNLHTSTVDNYDVHPLRTFLDAGVLIGLNTDDPGVSNIDIAHEYRVVKSEMGFSDAQLAQLQRNGVEMAFMSDSDRKALYAAKA.

Histidine 12 and histidine 14 together coordinate Zn(2+). Substrate-binding residues include histidine 14, aspartate 16, and glycine 170. Histidine 197 serves as a coordination point for Zn(2+). Glutamate 200 serves as the catalytic Proton donor. Zn(2+) is bound at residue aspartate 278. Aspartate 279 is a substrate binding site.

This sequence belongs to the metallo-dependent hydrolases superfamily. Adenosine and AMP deaminases family. Adenosine deaminase subfamily. It depends on Zn(2+) as a cofactor.

It catalyses the reaction adenosine + H2O + H(+) = inosine + NH4(+). The catalysed reaction is 2'-deoxyadenosine + H2O + H(+) = 2'-deoxyinosine + NH4(+). Functionally, catalyzes the hydrolytic deamination of adenosine and 2-deoxyadenosine. The polypeptide is Adenosine deaminase (Shewanella denitrificans (strain OS217 / ATCC BAA-1090 / DSM 15013)).